The primary structure comprises 2073 residues: Putative mediator of RNA polymerase II transcription subunit 26 (2073 aa).

Disordered regions lie at residues 22–94 (IERM…QSFQ), 115–146 (PQLQQQQQQQQQQQPSFNSNNNNNNNTNTYNF), 241–260 (QMQQQQIPHHQQNQQLQQQQ), and 287–334 (QQHQ…QNQQ). A compositionally biased stretch (polar residues) spans 31-41 (NQSVEMDSHTF). Low complexity predominate over residues 42 to 78 (NNNNNNNNNNNINNNNNINNNNNNNNNNNNNNNSINN). 2 coiled-coil regions span residues 166-453 (IQQQ…QQQQ) and 674-710 (LRQQQQQQQQQQQQQQQQQQQQQQQQQQQIQIQNQTI). Composition is skewed to low complexity over residues 287 to 314 (QQHQQHQQHQQHQQQHQQHQQQHQQHQQ) and 322 to 334 (QQHQQQQQPQNQQ). Disordered regions lie at residues 796–879 (KGNN…NNDI), 908–1175 (INNN…NNNI), 1215–1260 (NTTS…TVIN), 1403–1475 (NTSS…LPPK), 1489–1539 (KLST…SLSP), 1551–1571 (AAAAKKQQTQELSDSTAKSLS), 1587–1645 (KSQT…SKGK), 1804–1836 (INNNNNTHSNSPDENNTKMINDENNDPNNTGSS), 1868–1935 (NNNN…GYNN), and 2019–2073 (FNNN…QSYS). Low complexity-rich tracts occupy residues 798–870 (NNNN…NTNN) and 923–937 (SSSSNSNSSSPNIPN). Positions 938-947 (KPKKPVKSNS) are enriched in basic residues. The span at 953–963 (LLEDNDSDSSD) shows a compositional bias: acidic residues. Low complexity-rich tracts occupy residues 964 to 977 (SSDSSDSSDSSDSS), 1027 to 1038 (ASTATSTTTTTT), 1047 to 1065 (PTSKIKPSSTIPSQPTSIT), 1073 to 1115 (STTS…SSSS), and 1127 to 1156 (KKPISTINNNTLNNNTNSSINKIASNSTST). A compositionally biased stretch (polar residues) spans 1157–1166 (LGNKNLGTPS). Composition is skewed to low complexity over residues 1215–1258 (NTTS…TTTV) and 1403–1424 (NTSSTTSSASSSSSSSISNGNN). Residues 1425–1440 (SDKKRNRDQPITDTSK) show a composition bias toward basic and acidic residues. Composition is skewed to low complexity over residues 1444–1465 (SSSSSSSSSSSSSSSTNARSSS), 1490–1520 (LSTPSSSSSSSSSSSSSSTTTTTTSTGSTIP), 1527–1539 (SSSSSNNNNSLSP), and 1551–1560 (AAAAKKQQTQ). The span at 1561-1571 (ELSDSTAKSLS) shows a compositional bias: polar residues. Composition is skewed to low complexity over residues 1599–1609 (SSNVSGKSDSS) and 1804–1817 (INNNNNTHSNSPDE). A coiled-coil region spans residues 1884-1930 (NNMGNMNNQFNNMNNNNNNNQFNNGYNNNNNNNNNNNNNNNNNNNNM).

It belongs to the Mediator complex subunit 26 family. In terms of assembly, component of the Mediator complex.

The protein resides in the nucleus. Functionally, component of the Mediator complex, a coactivator involved in the regulated transcription of nearly all RNA polymerase II-dependent genes. Mediator functions as a bridge to convey information from gene-specific regulatory proteins to the basal RNA polymerase II transcription machinery. Mediator is recruited to promoters by direct interactions with regulatory proteins and serves as a scaffold for the assembly of a functional preinitiation complex with RNA polymerase II and the general transcription factors. The polypeptide is Putative mediator of RNA polymerase II transcription subunit 26 (med26) (Dictyostelium discoideum (Social amoeba)).